Consider the following 138-residue polypeptide: ATP synthase epsilon chain (138 aa).

Belongs to the ATPase epsilon chain family. As to quaternary structure, F-type ATPases have 2 components, CF(1) - the catalytic core - and CF(0) - the membrane proton channel. CF(1) has five subunits: alpha(3), beta(3), gamma(1), delta(1), epsilon(1). CF(0) has three main subunits: a, b and c.

It localises to the cell inner membrane. Produces ATP from ADP in the presence of a proton gradient across the membrane. The chain is ATP synthase epsilon chain from Trichlorobacter lovleyi (strain ATCC BAA-1151 / DSM 17278 / SZ) (Geobacter lovleyi).